Reading from the N-terminus, the 687-residue chain is Chloride channel protein ClC-Ka (687 aa).

The next 5 membrane-spanning stretches (helical) occupy residues 52-72, 94-114, 161-181, 204-224, and 236-256; these read FLVA…FAIG, LSWT…SQSI, IFLG…AYLG, AAAV…LFSI, and YWRG…LGVF. Ca(2+) is bound by residues glutamate 259, glutamate 261, aspartate 278, and glutamate 281. 6 consecutive transmembrane segments (helical) span residues 282–302, 325–345, 396–416, 417–437, 458–478, and 486–506; these read IFFF…YLFC, PSYA…PGVG, FTIF…LILA, TTIP…AAIG, VNPI…SGAV, and LLAF…MAVL. Over 507–687 the chain is Cytoplasmic; it reads AANAISQNCQ…STLINPPAPK (181 aa). 2 CBS domains span residues 551–609 and 626–687; these read MNCN…QPAS and CPTQ…PAPK.

The protein belongs to the chloride channel (TC 2.A.49) family. CLCNKA subfamily. In terms of assembly, homodimer. Interacts with BSND. In terms of tissue distribution, expressed predominantly in the kidney. Expressed strongly in the cortical thick ascending limb and the distal convoluted tubule, with minor expression in the S3 segment of the proximal tubule and the cortical collecting tubule.

It localises to the basolateral cell membrane. The catalysed reaction is chloride(in) = chloride(out). It carries out the reaction bromide(in) = bromide(out). It catalyses the reaction nitrate(in) = nitrate(out). The enzyme catalyses iodide(out) = iodide(in). Activated by extracellular Ca(2+) and inhibited by extracellular acidic pH. Its function is as follows. Anion-selective channel permeable to small monovalent anions with ion selectivity for chloride &gt; bromide &gt; nitrate &gt; iodide. Forms a homodimeric channel where each subunit has its own ion conduction pathway. Conducts double-barreled currents controlled by two types of gates, two fast gates that control each subunit independently and a slow common gate that opens and shuts off both subunits simultaneously. Assembles with the regulatory subunit BSND/Barttin for sorting at the basolateral plasma membrane domain. CLCNKA:BSND channels are activated upon membrane hyperpolarization mostly controlled by fast gating. Mediates transepithelial chloride transport from the lumen to interstitial compartment along the thin ascending limb of Henle's loop, contributing to generation of hypertonic medullary interstitium as a countercurrent system to achieve urine concentration. Conducts chloride currents in the stria vascularis of the inner ear to establish the endocochlear potential necessary for normal hearing. This Rattus norvegicus (Rat) protein is Chloride channel protein ClC-Ka.